The following is a 314-amino-acid chain: Ribosomal RNA small subunit methyltransferase H (314 aa).

Residues 36 to 38 (GGH), aspartate 56, phenylalanine 82, aspartate 104, and glutamine 111 each bind S-adenosyl-L-methionine.

It belongs to the methyltransferase superfamily. RsmH family.

It is found in the cytoplasm. The enzyme catalyses cytidine(1402) in 16S rRNA + S-adenosyl-L-methionine = N(4)-methylcytidine(1402) in 16S rRNA + S-adenosyl-L-homocysteine + H(+). Functionally, specifically methylates the N4 position of cytidine in position 1402 (C1402) of 16S rRNA. The polypeptide is Ribosomal RNA small subunit methyltransferase H (Ectopseudomonas mendocina (strain ymp) (Pseudomonas mendocina)).